A 239-amino-acid chain; its full sequence is tRNA (guanine-N(1)-)-methyltransferase (239 aa).

S-adenosyl-L-methionine is bound by residues glycine 109 and 128-133; that span reads IGDYVL.

This sequence belongs to the RNA methyltransferase TrmD family. Homodimer.

Its subcellular location is the cytoplasm. The catalysed reaction is guanosine(37) in tRNA + S-adenosyl-L-methionine = N(1)-methylguanosine(37) in tRNA + S-adenosyl-L-homocysteine + H(+). Its function is as follows. Specifically methylates guanosine-37 in various tRNAs. This chain is tRNA (guanine-N(1)-)-methyltransferase, found in Thermus thermophilus (strain ATCC 27634 / DSM 579 / HB8).